The sequence spans 542 residues: CTP synthase (542 aa).

The segment at 1-265 is amidoligase domain; it reads MARYVFITGG…DSEVLSAFGI (265 aa). S13 is a binding site for CTP. A UTP-binding site is contributed by S13. 14 to 19 lines the ATP pocket; sequence SLGKGI. Residue Y54 participates in L-glutamine binding. Position 71 (D71) interacts with ATP. Mg(2+)-binding residues include D71 and E139. Residues 146-148, 186-191, and K222 contribute to the CTP site; these read DIE and KTKPTQ. UTP-binding positions include 186 to 191 and K222; that span reads KTKPTQ. Residues 291–541 enclose the Glutamine amidotransferase type-1 domain; sequence TIAVVGKYTG…IEAAIEQSRL (251 aa). G353 contributes to the L-glutamine binding site. C380 serves as the catalytic Nucleophile; for glutamine hydrolysis. L-glutamine-binding positions include 381–384, E404, and R469; that span reads FGMQ. Residues H514 and E516 contribute to the active site.

It belongs to the CTP synthase family. As to quaternary structure, homotetramer.

It catalyses the reaction UTP + L-glutamine + ATP + H2O = CTP + L-glutamate + ADP + phosphate + 2 H(+). The enzyme catalyses L-glutamine + H2O = L-glutamate + NH4(+). It carries out the reaction UTP + NH4(+) + ATP = CTP + ADP + phosphate + 2 H(+). It functions in the pathway pyrimidine metabolism; CTP biosynthesis via de novo pathway; CTP from UDP: step 2/2. With respect to regulation, allosterically activated by GTP, when glutamine is the substrate; GTP has no effect on the reaction when ammonia is the substrate. The allosteric effector GTP functions by stabilizing the protein conformation that binds the tetrahedral intermediate(s) formed during glutamine hydrolysis. Inhibited by the product CTP, via allosteric rather than competitive inhibition. In terms of biological role, catalyzes the ATP-dependent amination of UTP to CTP with either L-glutamine or ammonia as the source of nitrogen. Regulates intracellular CTP levels through interactions with the four ribonucleotide triphosphates. The protein is CTP synthase of Brucella melitensis biotype 1 (strain ATCC 23456 / CCUG 17765 / NCTC 10094 / 16M).